The following is a 362-amino-acid chain: Chorismate synthase (362 aa).

NADP(+) contacts are provided by R48 and R54. Residues 125 to 127 (RSS), 238 to 239 (NA), G278, 293 to 297 (KPTSS), and R319 each bind FMN.

Belongs to the chorismate synthase family. Homotetramer. It depends on FMNH2 as a cofactor.

The enzyme catalyses 5-O-(1-carboxyvinyl)-3-phosphoshikimate = chorismate + phosphate. The protein operates within metabolic intermediate biosynthesis; chorismate biosynthesis; chorismate from D-erythrose 4-phosphate and phosphoenolpyruvate: step 7/7. Functionally, catalyzes the anti-1,4-elimination of the C-3 phosphate and the C-6 proR hydrogen from 5-enolpyruvylshikimate-3-phosphate (EPSP) to yield chorismate, which is the branch point compound that serves as the starting substrate for the three terminal pathways of aromatic amino acid biosynthesis. This reaction introduces a second double bond into the aromatic ring system. The sequence is that of Chorismate synthase from Aeromonas salmonicida (strain A449).